A 469-amino-acid chain; its full sequence is UDP-N-acetylmuramate--L-alanine ligase (469 aa).

120–126 provides a ligand contact to ATP; it reads GTHGKTT.

This sequence belongs to the MurCDEF family.

The protein localises to the cytoplasm. The catalysed reaction is UDP-N-acetyl-alpha-D-muramate + L-alanine + ATP = UDP-N-acetyl-alpha-D-muramoyl-L-alanine + ADP + phosphate + H(+). It functions in the pathway cell wall biogenesis; peptidoglycan biosynthesis. In terms of biological role, cell wall formation. The protein is UDP-N-acetylmuramate--L-alanine ligase of Acetivibrio thermocellus (strain ATCC 27405 / DSM 1237 / JCM 9322 / NBRC 103400 / NCIMB 10682 / NRRL B-4536 / VPI 7372) (Clostridium thermocellum).